The chain runs to 324 residues: MAASLWVGPRGTINNYPGFNPSVDAEAIRKAIKGIGTDEKTLINILTERSNAQRQLIVKQYQEAYEQALKADLKGDLSGHFEHVMVALITAPAVFDAKQLKKSMRGMGTDEDTLIEILTTRTSRQMKEISQAYYTAYKKNLRDDISSETSGDFRKALLTLADGGRDESLKVDEHLAKKDAQTLYDAGEKKWGTDEDKFTEILCLRSFPQLKLTFDEYRNISQKDIEDSIKGELSGHFEDLLLAVVRCTRNTPAFLAGRLHQALKGAGTDEFTLNRIMVSRSEIDLLDIRREFKKHYGCSLYSAIQSDTSGDYRTVLLKICGGDD.

Annexin repeat units lie at residues 19 to 90, 91 to 162, 174 to 246, and 250 to 321; these read FNPS…ALIT, APAV…TLAD, HLAK…AVVR, and NTPA…KICG. Lysine 178 is modified (N6-acetyllysine). The residue at position 268 (threonine 268) is a Phosphothreonine.

It belongs to the annexin family.

Its function is as follows. Inhibitor of phospholipase A2, also possesses anti-coagulant properties. This is Annexin A3 (Anxa3) from Rattus norvegicus (Rat).